The sequence spans 617 residues: Dihydroxy-acid dehydratase (617 aa).

Aspartate 82 contacts Mg(2+). Position 123 (cysteine 123) interacts with [2Fe-2S] cluster. Residues aspartate 124 and lysine 125 each coordinate Mg(2+). At lysine 125 the chain carries N6-carboxylysine. [2Fe-2S] cluster is bound at residue cysteine 197. Mg(2+) is bound at residue glutamate 497. Serine 523 acts as the Proton acceptor in catalysis.

The protein belongs to the IlvD/Edd family. Homodimer. It depends on [2Fe-2S] cluster as a cofactor. Requires Mg(2+) as cofactor.

It carries out the reaction (2R)-2,3-dihydroxy-3-methylbutanoate = 3-methyl-2-oxobutanoate + H2O. The enzyme catalyses (2R,3R)-2,3-dihydroxy-3-methylpentanoate = (S)-3-methyl-2-oxopentanoate + H2O. The protein operates within amino-acid biosynthesis; L-isoleucine biosynthesis; L-isoleucine from 2-oxobutanoate: step 3/4. Its pathway is amino-acid biosynthesis; L-valine biosynthesis; L-valine from pyruvate: step 3/4. Its function is as follows. Functions in the biosynthesis of branched-chain amino acids. Catalyzes the dehydration of (2R,3R)-2,3-dihydroxy-3-methylpentanoate (2,3-dihydroxy-3-methylvalerate) into 2-oxo-3-methylpentanoate (2-oxo-3-methylvalerate) and of (2R)-2,3-dihydroxy-3-methylbutanoate (2,3-dihydroxyisovalerate) into 2-oxo-3-methylbutanoate (2-oxoisovalerate), the penultimate precursor to L-isoleucine and L-valine, respectively. The sequence is that of Dihydroxy-acid dehydratase from Streptomyces coelicolor (strain ATCC BAA-471 / A3(2) / M145).